Here is a 271-residue protein sequence, read N- to C-terminus: Mannosyl-3-phosphoglycerate phosphatase (271 aa).

Asp13 (nucleophile) is an active-site residue. Mg(2+) contacts are provided by Asp13, Asp15, and Asp214.

Belongs to the HAD-like hydrolase superfamily. MPGP family. Mg(2+) is required as a cofactor.

It localises to the cytoplasm. The enzyme catalyses 2-O-(alpha-D-mannosyl)-3-phosphoglycerate + H2O = (2R)-2-O-(alpha-D-mannosyl)-glycerate + phosphate. This is Mannosyl-3-phosphoglycerate phosphatase (yedP) from Shigella dysenteriae serotype 1 (strain Sd197).